Reading from the N-terminus, the 357-residue chain is Holliday junction branch migration complex subunit RuvB (357 aa).

The span at 1 to 15 (MAIQSDSLSSLPDSP) shows a compositional bias: low complexity. Positions 1 to 30 (MAIQSDSLSSLPDSPRIVAPQPVSPNEESI) are disordered. Residues 13–195 (DSPRIVAPQP…FGIVSRLEFY (183 aa)) form a large ATPase domain (RuvB-L) region. Residues Leu-34, Arg-35, Gly-76, Lys-79, Thr-80, Thr-81, 142 to 144 (EDF), Arg-185, Tyr-195, and Arg-232 contribute to the ATP site. Thr-80 serves as a coordination point for Mg(2+). The small ATPAse domain (RuvB-S) stretch occupies residues 196-266 (NTDELARIVT…AAGRALAMLD (71 aa)). Residues 269 to 357 (PQGLDVMDRK…SGGTGELFSK (89 aa)) are head domain (RuvB-H). Residues Arg-305, Arg-324, and Arg-329 each coordinate DNA.

Belongs to the RuvB family. As to quaternary structure, homohexamer. Forms an RuvA(8)-RuvB(12)-Holliday junction (HJ) complex. HJ DNA is sandwiched between 2 RuvA tetramers; dsDNA enters through RuvA and exits via RuvB. An RuvB hexamer assembles on each DNA strand where it exits the tetramer. Each RuvB hexamer is contacted by two RuvA subunits (via domain III) on 2 adjacent RuvB subunits; this complex drives branch migration. In the full resolvosome a probable DNA-RuvA(4)-RuvB(12)-RuvC(2) complex forms which resolves the HJ.

It localises to the cytoplasm. The catalysed reaction is ATP + H2O = ADP + phosphate + H(+). The RuvA-RuvB-RuvC complex processes Holliday junction (HJ) DNA during genetic recombination and DNA repair, while the RuvA-RuvB complex plays an important role in the rescue of blocked DNA replication forks via replication fork reversal (RFR). RuvA specifically binds to HJ cruciform DNA, conferring on it an open structure. The RuvB hexamer acts as an ATP-dependent pump, pulling dsDNA into and through the RuvAB complex. RuvB forms 2 homohexamers on either side of HJ DNA bound by 1 or 2 RuvA tetramers; 4 subunits per hexamer contact DNA at a time. Coordinated motions by a converter formed by DNA-disengaged RuvB subunits stimulates ATP hydrolysis and nucleotide exchange. Immobilization of the converter enables RuvB to convert the ATP-contained energy into a lever motion, pulling 2 nucleotides of DNA out of the RuvA tetramer per ATP hydrolyzed, thus driving DNA branch migration. The RuvB motors rotate together with the DNA substrate, which together with the progressing nucleotide cycle form the mechanistic basis for DNA recombination by continuous HJ branch migration. Branch migration allows RuvC to scan DNA until it finds its consensus sequence, where it cleaves and resolves cruciform DNA. The chain is Holliday junction branch migration complex subunit RuvB from Bordetella parapertussis (strain 12822 / ATCC BAA-587 / NCTC 13253).